Consider the following 396-residue polypeptide: Ribosomal RNA large subunit methyltransferase G (396 aa).

It belongs to the methyltransferase superfamily. RlmG family.

It is found in the cytoplasm. The enzyme catalyses guanosine(1835) in 23S rRNA + S-adenosyl-L-methionine = N(2)-methylguanosine(1835) in 23S rRNA + S-adenosyl-L-homocysteine + H(+). Specifically methylates the guanine in position 1835 (m2G1835) of 23S rRNA. The chain is Ribosomal RNA large subunit methyltransferase G from Yersinia enterocolitica serotype O:8 / biotype 1B (strain NCTC 13174 / 8081).